Reading from the N-terminus, the 304-residue chain is NADH-cytochrome b5 reductase 2 (304 aa).

A helical transmembrane segment spans residues 6 to 26; sequence GTPVVVAVAAVAATVLLLLLL. The FAD-binding FR-type domain occupies 43 to 155; sequence QAKYPLPLVG…RGPNGLLVYK (113 aa). Residues 135–165 and 174–209 each bind FAD; these read DSMKIGDVIDFRGPNGLLVYKGSGTFMIKPD and FAKHLGVIAGGTGITPMLQLIRHITSDPKDSTKCYL.

This sequence belongs to the flavoprotein pyridine nucleotide cytochrome reductase family. The cofactor is FAD.

The protein localises to the membrane. It catalyses the reaction 2 Fe(III)-[cytochrome b5] + NADH = 2 Fe(II)-[cytochrome b5] + NAD(+) + H(+). Its function is as follows. NADH-cytochrome b5 reductases are involved in desaturation and elongation of fatty acids, cholesterol biosynthesis and drug metabolism. The polypeptide is NADH-cytochrome b5 reductase 2 (CYB5R2) (Gallus gallus (Chicken)).